The sequence spans 351 residues: Peptide chain release factor 1 (351 aa).

Glutamine 229 bears the N5-methylglutamine mark.

The protein belongs to the prokaryotic/mitochondrial release factor family. In terms of processing, methylated by PrmC. Methylation increases the termination efficiency of RF1.

Its subcellular location is the cytoplasm. Peptide chain release factor 1 directs the termination of translation in response to the peptide chain termination codons UAG and UAA. This Cereibacter sphaeroides (strain ATCC 17025 / ATH 2.4.3) (Rhodobacter sphaeroides) protein is Peptide chain release factor 1.